The primary structure comprises 427 residues: tRNA(Ile)-lysidine synthase (427 aa).

Ser21 to Ser26 lines the ATP pocket.

This sequence belongs to the tRNA(Ile)-lysidine synthase family.

It is found in the cytoplasm. It catalyses the reaction cytidine(34) in tRNA(Ile2) + L-lysine + ATP = lysidine(34) in tRNA(Ile2) + AMP + diphosphate + H(+). Its function is as follows. Ligates lysine onto the cytidine present at position 34 of the AUA codon-specific tRNA(Ile) that contains the anticodon CAU, in an ATP-dependent manner. Cytidine is converted to lysidine, thus changing the amino acid specificity of the tRNA from methionine to isoleucine. The chain is tRNA(Ile)-lysidine synthase from Actinobacillus succinogenes (strain ATCC 55618 / DSM 22257 / CCUG 43843 / 130Z).